Consider the following 930-residue polypeptide: Isoleucine--tRNA ligase (930 aa).

Residues 57–67 carry the 'HIGH' region motif; it reads PYANGNIHVGH. Residue glutamate 554 coordinates L-isoleucyl-5'-AMP. The 'KMSKS' region motif lies at 595–599; the sequence is KMSKS. Lysine 598 contributes to the ATP binding site. 4 residues coordinate Zn(2+): cysteine 888, cysteine 891, cysteine 908, and cysteine 911.

It belongs to the class-I aminoacyl-tRNA synthetase family. IleS type 1 subfamily. Monomer. Requires Zn(2+) as cofactor.

The protein localises to the cytoplasm. It catalyses the reaction tRNA(Ile) + L-isoleucine + ATP = L-isoleucyl-tRNA(Ile) + AMP + diphosphate. Functionally, catalyzes the attachment of isoleucine to tRNA(Ile). As IleRS can inadvertently accommodate and process structurally similar amino acids such as valine, to avoid such errors it has two additional distinct tRNA(Ile)-dependent editing activities. One activity is designated as 'pretransfer' editing and involves the hydrolysis of activated Val-AMP. The other activity is designated 'posttransfer' editing and involves deacylation of mischarged Val-tRNA(Ile). This chain is Isoleucine--tRNA ligase, found in Streptococcus gordonii (strain Challis / ATCC 35105 / BCRC 15272 / CH1 / DL1 / V288).